Reading from the N-terminus, the 120-residue chain is Large ribosomal subunit protein bL12 (120 aa).

It belongs to the bacterial ribosomal protein bL12 family. As to quaternary structure, homodimer. Part of the ribosomal stalk of the 50S ribosomal subunit. Forms a multimeric L10(L12)X complex, where L10 forms an elongated spine to which 2 to 4 L12 dimers bind in a sequential fashion. Binds GTP-bound translation factors.

Its function is as follows. Forms part of the ribosomal stalk which helps the ribosome interact with GTP-bound translation factors. Is thus essential for accurate translation. The polypeptide is Large ribosomal subunit protein bL12 (Aeromonas salmonicida (strain A449)).